The following is a 301-amino-acid chain: Ribosomal protein L11 methyltransferase (301 aa).

S-adenosyl-L-methionine-binding residues include Thr-152, Gly-173, Asp-195, and Asn-236.

It belongs to the methyltransferase superfamily. PrmA family.

The protein resides in the cytoplasm. The enzyme catalyses L-lysyl-[protein] + 3 S-adenosyl-L-methionine = N(6),N(6),N(6)-trimethyl-L-lysyl-[protein] + 3 S-adenosyl-L-homocysteine + 3 H(+). Methylates ribosomal protein L11. This is Ribosomal protein L11 methyltransferase from Dictyoglomus thermophilum (strain ATCC 35947 / DSM 3960 / H-6-12).